The sequence spans 889 residues: DNA gyrase subunit A (889 aa).

Residues 35 to 501 (LPDVRDGLKP…GFEDLEDEDL (467 aa)) enclose the Topo IIA-type catalytic domain. Tyr123 functions as the O-(5'-phospho-DNA)-tyrosine intermediate in the catalytic mechanism. The GyrA-box signature appears at 528-534 (QNRGGRG). Positions 811–889 (KEDAEDETNE…IQQSSDEDEE (79 aa)) are disordered. The span at 813–823 (DAEDETNEDEQ) shows a compositional bias: acidic residues. Positions 863-875 (DGRIEVRQDFMDR) are enriched in basic and acidic residues. The span at 876–889 (VEEDIQQSSDEDEE) shows a compositional bias: acidic residues.

It belongs to the type II topoisomerase GyrA/ParC subunit family. As to quaternary structure, heterotetramer, composed of two GyrA and two GyrB chains. In the heterotetramer, GyrA contains the active site tyrosine that forms a transient covalent intermediate with DNA, while GyrB binds cofactors and catalyzes ATP hydrolysis.

The protein resides in the cytoplasm. The catalysed reaction is ATP-dependent breakage, passage and rejoining of double-stranded DNA.. A type II topoisomerase that negatively supercoils closed circular double-stranded (ds) DNA in an ATP-dependent manner to modulate DNA topology and maintain chromosomes in an underwound state. Negative supercoiling favors strand separation, and DNA replication, transcription, recombination and repair, all of which involve strand separation. Also able to catalyze the interconversion of other topological isomers of dsDNA rings, including catenanes and knotted rings. Type II topoisomerases break and join 2 DNA strands simultaneously in an ATP-dependent manner. The protein is DNA gyrase subunit A of Staphylococcus aureus (strain Mu50 / ATCC 700699).